The sequence spans 273 residues: Large ribosomal subunit protein uL2cz/uL2cy (273 aa).

Disordered regions lie at residues 1 to 23 (MAIHLYKTSTPSTRNGAVDSQVK) and 223 to 273 (NPVD…RRSK).

It belongs to the universal ribosomal protein uL2 family. As to quaternary structure, part of the 50S ribosomal subunit.

Its subcellular location is the plastid. It localises to the chloroplast. The polypeptide is Large ribosomal subunit protein uL2cz/uL2cy (rpl2-A) (Oenothera argillicola (Appalachian evening primrose)).